A 109-amino-acid chain; its full sequence is Large ribosomal subunit protein uL22 (109 aa).

The protein belongs to the universal ribosomal protein uL22 family. Part of the 50S ribosomal subunit.

In terms of biological role, this protein binds specifically to 23S rRNA; its binding is stimulated by other ribosomal proteins, e.g. L4, L17, and L20. It is important during the early stages of 50S assembly. It makes multiple contacts with different domains of the 23S rRNA in the assembled 50S subunit and ribosome. The globular domain of the protein is located near the polypeptide exit tunnel on the outside of the subunit, while an extended beta-hairpin is found that lines the wall of the exit tunnel in the center of the 70S ribosome. The protein is Large ribosomal subunit protein uL22 of Psychrobacter cryohalolentis (strain ATCC BAA-1226 / DSM 17306 / VKM B-2378 / K5).